We begin with the raw amino-acid sequence, 400 residues long: MGGWSSKHRKGMGTNLSVPNPLGFFPDHQLDPAFGANSNNPDWDFNPNKDHWPEANQVGAGAFGPGFTPPHGGFLGWSPQAQGILTTVPAAPPPASTNRQSGRQPTPISPPLRDTHPQAMQWNSTAFHQALQDPRVRGLYFPAGGSSSGTVNPVPNTVSHISSIFTKTGDPASNMESTTSGFLGPLLVLQAGFFLLTRILTIPQSLDSWWTSLNFLGGAPGCIGQNSQSQTSNHSPTSCPPTCPGYRWMCLRRFIIFLFILLLCLIFLLVLLDYQGMLPVCPLLPGSTTTSTGPCRTCTITAQGTSMFPSCCCTKPSDGNCTCIPIPSSWGFAKFLWEWASVRFSWLSLLVPFVQWFAGLSPTVWLSVIWMIWYWGPSLYNILSPFLPLLPIFLCLWVYI.

Met-1 is modified (N-acetylmethionine). Residue Gly-2 is the site of N-myristoyl glycine; by host attachment. The segment at 2-119 (GGWSSKHRKG…PPLRDTHPQA (118 aa)) is pre-S1. Residues 2 to 174 (GGWSSKHRKG…FTKTGDPASN (173 aa)) form a pre-S region. At 2-181 (GGWSSKHRKG…ASNMESTTSG (180 aa)) the chain is on the virion surface; in external conformation side. Topologically, residues 2-253 (GGWSSKHRKG…PGYRWMCLRR (252 aa)) are intravirion; in internal conformation. Residue Trp-4 is glycosylated (N-linked (GlcNAc...) asparagine). The tract at residues 89–117 (PAAPPPASTNRQSGRQPTPISPPLRDTHP) is disordered. Positions 96 to 106 (STNRQSGRQPT) are enriched in polar residues. The pre-S2 stretch occupies residues 120-174 (MQWNSTAFHQALQDPRVRGLYFPAGGSSSGTVNPVPNTVSHISSIFTKTGDPASN). The helical transmembrane segment at 182 to 202 (FLGPLLVLQAGFFLLTRILTI) threads the bilayer. Topologically, residues 203–253 (PQSLDSWWTSLNFLGGAPGCIGQNSQSQTSNHSPTSCPPTCPGYRWMCLRR) are intravirion; in external conformation. Residues 254-274 (FIIFLFILLLCLIFLLVLLDY) traverse the membrane as a helical segment. The Virion surface segment spans residues 275 to 348 (QGMLPVCPLL…WASVRFSWLS (74 aa)). N-linked (GlcNAc...) asparagine; by host glycosylation occurs at Asn-320. The helical transmembrane segment at 349 to 369 (LLVPFVQWFAGLSPTVWLSVI) threads the bilayer. Over 370–375 (WMIWYW) the chain is Intravirion. A helical membrane pass occupies residues 376 to 398 (GPSLYNILSPFLPLLPIFLCLWV). Residues 399–400 (YI) are Virion surface-facing.

The protein belongs to the orthohepadnavirus major surface antigen family. In terms of assembly, in its internal form (Li-HBsAg), interacts with the capsid protein and with the isoform S. Interacts with host chaperone CANX. Associates with host chaperone CANX through its pre-S2 N glycan; this association may be essential for isoform M proper secretion. As to quaternary structure, interacts with isoform L. Interacts with the antigens of satellite virus HDV (HDVAgs); this interaction is required for encapsidation of HDV genomic RNA. Isoform M is N-terminally acetylated by host at a ratio of 90%, and N-glycosylated by host at the pre-S2 region. Post-translationally, myristoylated.

It localises to the virion membrane. Functionally, the large envelope protein exists in two topological conformations, one which is termed 'external' or Le-HBsAg and the other 'internal' or Li-HBsAg. In its external conformation the protein attaches the virus to cell receptors and thereby initiating infection. This interaction determines the species specificity and liver tropism. This attachment induces virion internalization predominantly through caveolin-mediated endocytosis. The large envelope protein also assures fusion between virion membrane and endosomal membrane. In its internal conformation the protein plays a role in virion morphogenesis and mediates the contact with the nucleocapsid like a matrix protein. Its function is as follows. The middle envelope protein plays an important role in the budding of the virion. It is involved in the induction of budding in a nucleocapsid independent way. In this process the majority of envelope proteins bud to form subviral lipoprotein particles of 22 nm of diameter that do not contain a nucleocapsid. The protein is Large envelope protein of Homo sapiens (Human).